Consider the following 503-residue polypeptide: ATP synthase subunit alpha (503 aa).

171–178 serves as a coordination point for ATP; the sequence is DRQTGKTA.

It belongs to the ATPase alpha/beta chains family. In terms of assembly, F-type ATPases have 2 components, CF(1) - the catalytic core - and CF(0) - the membrane proton channel. CF(1) has five subunits: alpha(3), beta(3), gamma(1), delta(1), epsilon(1). CF(0) has four main subunits: a(1), b(1), b'(1) and c(9-12).

The protein resides in the cellular thylakoid membrane. The catalysed reaction is ATP + H2O + 4 H(+)(in) = ADP + phosphate + 5 H(+)(out). Produces ATP from ADP in the presence of a proton gradient across the membrane. The alpha chain is a regulatory subunit. In Synechococcus sp. (strain PCC 6716), this protein is ATP synthase subunit alpha.